The sequence spans 493 residues: MRTNRLSWILVLSVVIFLVIINTINASDDEERLMVDVFRGYNSLIQPVRNSSELPLIVKMALQLVLLINVDEKDQVMHTNVWLTLQWHDFQMKWNPVNYGEIKQIRVSPDKVWLPDIVLFNNADGNYEVSFMCNVVINHKGDMLWVPPAIYKSSCIIDVEFFPFDEQVCTLVFGSWTYNENEIKLEFVQAELVDVSEYSASSIWDVIDVPASLVNKRSRIEFQVRIRRKTLFYTVVLIIPTVLMAFLSMAVFFLPTDSGEKITLTISVLLSIVVFLLLVSKILPPTSSTIPLMAKYLLLTFVLNVITILVTVIIINVYFRGPRTHRMPQWVRVVFLQFLPKLVCMKRPKSASERSAVRSGMAQLPGVGQFTLSPSAHHPLCPSADDRTTTIRNTASNETSAYYPLSTDALRAIDAIEYITEHLKRDEQHKSFRDDWKYVAMIIDRLLLYVFFGITVGGTCGILFSAPHVFQRIDQQEMLDRLKEKYDTASNIP.

Residues 1 to 26 (MRTNRLSWILVLSVVIFLVIINTINA) form the signal peptide. Asn25 and Asn50 each carry an N-linked (GlcNAc...) asparagine glycan. Topologically, residues 27–232 (SDDEERLMVD…QVRIRRKTLF (206 aa)) are extracellular. A disulfide bridge links Cys155 with Cys169. Helical transmembrane passes span 233–254 (YTVV…VFFL), 262–280 (ITLT…LLVS), and 296–317 (YLLL…IINV). Over 318-445 (YFRGPRTHRM…WKYVAMIIDR (128 aa)) the chain is Cytoplasmic. The chain crosses the membrane as a helical span at residues 446–466 (LLLYVFFGITVGGTCGILFSA).

The protein belongs to the ligand-gated ion channel (TC 1.A.9) family. Acetylcholine receptor (TC 1.A.9.1) subfamily. In terms of assembly, interacts with lev-1. Component of nicotinic acetylcholine receptor composed of 2 non-alpha subunits lev-1 and unc-29, and 3 alpha subunits unc-38, unc-63 and lev-8. Interacts with oig-4. Interacts with crld-1.

It is found in the postsynaptic cell membrane. The protein resides in the cell membrane. In terms of biological role, non-alpha subunit of nicotinic acetylcholine receptor (nAChR). Involved in nAChR sensitivity to nicotine and levasimole. This Caenorhabditis elegans protein is Acetylcholine receptor subunit beta-type unc-29.